Here is a 314-residue protein sequence, read N- to C-terminus: 4-hydroxy-3-methylbut-2-enyl diphosphate reductase (314 aa).

Cys-12 serves as a coordination point for [4Fe-4S] cluster. (2E)-4-hydroxy-3-methylbut-2-enyl diphosphate contacts are provided by His-41 and His-74. Residues His-41 and His-74 each coordinate dimethylallyl diphosphate. Positions 41 and 74 each coordinate isopentenyl diphosphate. Cys-96 serves as a coordination point for [4Fe-4S] cluster. Position 124 (His-124) interacts with (2E)-4-hydroxy-3-methylbut-2-enyl diphosphate. Residue His-124 participates in dimethylallyl diphosphate binding. Residue His-124 coordinates isopentenyl diphosphate. The Proton donor role is filled by Glu-126. Position 168 (Thr-168) interacts with (2E)-4-hydroxy-3-methylbut-2-enyl diphosphate. Residue Cys-198 participates in [4Fe-4S] cluster binding. (2E)-4-hydroxy-3-methylbut-2-enyl diphosphate contacts are provided by Ser-226, Ser-227, Asn-228, and Ser-270. 4 residues coordinate dimethylallyl diphosphate: Ser-226, Ser-227, Asn-228, and Ser-270. Isopentenyl diphosphate contacts are provided by Ser-226, Ser-227, Asn-228, and Ser-270.

This sequence belongs to the IspH family. Requires [4Fe-4S] cluster as cofactor.

The enzyme catalyses isopentenyl diphosphate + 2 oxidized [2Fe-2S]-[ferredoxin] + H2O = (2E)-4-hydroxy-3-methylbut-2-enyl diphosphate + 2 reduced [2Fe-2S]-[ferredoxin] + 2 H(+). The catalysed reaction is dimethylallyl diphosphate + 2 oxidized [2Fe-2S]-[ferredoxin] + H2O = (2E)-4-hydroxy-3-methylbut-2-enyl diphosphate + 2 reduced [2Fe-2S]-[ferredoxin] + 2 H(+). The protein operates within isoprenoid biosynthesis; dimethylallyl diphosphate biosynthesis; dimethylallyl diphosphate from (2E)-4-hydroxy-3-methylbutenyl diphosphate: step 1/1. It participates in isoprenoid biosynthesis; isopentenyl diphosphate biosynthesis via DXP pathway; isopentenyl diphosphate from 1-deoxy-D-xylulose 5-phosphate: step 6/6. Catalyzes the conversion of 1-hydroxy-2-methyl-2-(E)-butenyl 4-diphosphate (HMBPP) into a mixture of isopentenyl diphosphate (IPP) and dimethylallyl diphosphate (DMAPP). Acts in the terminal step of the DOXP/MEP pathway for isoprenoid precursor biosynthesis. The sequence is that of 4-hydroxy-3-methylbut-2-enyl diphosphate reductase from Ectopseudomonas mendocina (strain ymp) (Pseudomonas mendocina).